Consider the following 229-residue polypeptide: ATP-dependent dethiobiotin synthetase BioD (229 aa).

Position 12 to 17 (12 to 17 (GVGKTV)) interacts with ATP. Thr16 contributes to the Mg(2+) binding site. Lys37 is a catalytic residue. Thr41 contributes to the substrate binding site. Residues Asp53, 112-115 (EGAG), and 201-203 (PAG) contribute to the ATP site. Mg(2+) contacts are provided by Asp53 and Glu112.

The protein belongs to the dethiobiotin synthetase family. Homodimer. Mg(2+) is required as a cofactor.

The protein resides in the cytoplasm. The catalysed reaction is (7R,8S)-7,8-diammoniononanoate + CO2 + ATP = (4R,5S)-dethiobiotin + ADP + phosphate + 3 H(+). The protein operates within cofactor biosynthesis; biotin biosynthesis; biotin from 7,8-diaminononanoate: step 1/2. Functionally, catalyzes a mechanistically unusual reaction, the ATP-dependent insertion of CO2 between the N7 and N8 nitrogen atoms of 7,8-diaminopelargonic acid (DAPA, also called 7,8-diammoniononanoate) to form a ureido ring. The chain is ATP-dependent dethiobiotin synthetase BioD from Mycobacterium sp. (strain JLS).